A 1119-amino-acid polypeptide reads, in one-letter code: Putative transcription factor SEF1 (1119 aa).

Disordered stretches follow at residues 1-70 (MGDP…TQSR) and 86-105 (QNGEDSSNISNNSNAVSKGK). Over residues 47-70 (LHTQQSYYGNGTDGASESALTQSR) the composition is skewed to polar residues. The zn(2)-C6 fungal-type DNA-binding region spans 118-148 (CTHCRQHKIKCNASEKFPAPCSRCERMGLHC). Disordered stretches follow at residues 236–290 (QLLQ…PANT), 306–335 (SQQISSSSPQNSSPTTTGHSPANDLSSSKQ), 894–913 (ASSSSTATRLNADNPTTDTN), 926–962 (KKSSKSSDTPTNKPKFNSTSSIPTATPTSEQRAAHNT), and 994–1018 (SADSNGTSNNNIPNSTAPLNTPDTN). The span at 243 to 260 (TTTTNPTTSSNSKVVTPT) shows a compositional bias: low complexity. Over residues 261–288 (GSDHSPASHNGGSLSSGKPQLLNDSVPA) the composition is skewed to polar residues. The segment covering 306–322 (SQQISSSSPQNSSPTTT) has biased composition (low complexity). Polar residues-rich tracts occupy residues 323-335 (GHSPANDLSSSKQ), 902-913 (RLNADNPTTDTN), and 931-942 (SSDTPTNKPKFN). A compositionally biased stretch (low complexity) spans 943 to 954 (STSSIPTATPTS).

It is found in the nucleus. Functionally, putative transcription factor. Suppresses the lethal phenotype of RPM2 deletion. This Kluyveromyces lactis (strain ATCC 8585 / CBS 2359 / DSM 70799 / NBRC 1267 / NRRL Y-1140 / WM37) (Yeast) protein is Putative transcription factor SEF1 (SEF1).